Reading from the N-terminus, the 318-residue chain is Deoxyribose-phosphate aldolase (318 aa).

Asp-155 (proton donor/acceptor) is an active-site residue. Residue Lys-218 is the Schiff-base intermediate with acetaldehyde of the active site. The Proton donor/acceptor role is filled by Lys-254.

It belongs to the DeoC/FbaB aldolase family. DeoC type 2 subfamily. As to quaternary structure, interacts with YBX1.

The protein localises to the cytoplasm. It is found in the cytoplasmic granule. The protein resides in the nucleus. It carries out the reaction 2-deoxy-D-ribose 5-phosphate = D-glyceraldehyde 3-phosphate + acetaldehyde. Its pathway is carbohydrate degradation; 2-deoxy-D-ribose 1-phosphate degradation; D-glyceraldehyde 3-phosphate and acetaldehyde from 2-deoxy-alpha-D-ribose 1-phosphate: step 2/2. Functionally, catalyzes a reversible aldol reaction between acetaldehyde and D-glyceraldehyde 3-phosphate to generate 2-deoxy-D-ribose 5-phosphate. Participates in stress granule (SG) assembly. May allow ATP production from extracellular deoxyinosine in conditions of energy deprivation. The protein is Deoxyribose-phosphate aldolase (DERA) of Bos taurus (Bovine).